The primary structure comprises 68 residues: Small, acid-soluble spore protein I (68 aa).

The protein belongs to the SspI family.

It is found in the spore core. In Halalkalibacterium halodurans (strain ATCC BAA-125 / DSM 18197 / FERM 7344 / JCM 9153 / C-125) (Bacillus halodurans), this protein is Small, acid-soluble spore protein I.